The following is a 61-amino-acid chain: Large ribosomal subunit protein uL30 (61 aa).

Belongs to the universal ribosomal protein uL30 family. In terms of assembly, part of the 50S ribosomal subunit.

The sequence is that of Large ribosomal subunit protein uL30 from Chlorobium phaeobacteroides (strain DSM 266 / SMG 266 / 2430).